We begin with the raw amino-acid sequence, 207 residues long: 3-isopropylmalate dehydratase small subunit (207 aa).

Belongs to the LeuD family. LeuD type 1 subfamily. In terms of assembly, heterodimer of LeuC and LeuD.

It catalyses the reaction (2R,3S)-3-isopropylmalate = (2S)-2-isopropylmalate. The protein operates within amino-acid biosynthesis; L-leucine biosynthesis; L-leucine from 3-methyl-2-oxobutanoate: step 2/4. In terms of biological role, catalyzes the isomerization between 2-isopropylmalate and 3-isopropylmalate, via the formation of 2-isopropylmaleate. This is 3-isopropylmalate dehydratase small subunit from Acidithiobacillus ferrooxidans (strain ATCC 23270 / DSM 14882 / CIP 104768 / NCIMB 8455) (Ferrobacillus ferrooxidans (strain ATCC 23270)).